The following is a 130-amino-acid chain: Small ribosomal subunit protein uS8 (130 aa).

This sequence belongs to the universal ribosomal protein uS8 family. Part of the 30S ribosomal subunit. Contacts proteins S5 and S12.

Its function is as follows. One of the primary rRNA binding proteins, it binds directly to 16S rRNA central domain where it helps coordinate assembly of the platform of the 30S subunit. This is Small ribosomal subunit protein uS8 from Pseudomonas putida (strain ATCC 700007 / DSM 6899 / JCM 31910 / BCRC 17059 / LMG 24140 / F1).